Here is a 734-residue protein sequence, read N- to C-terminus: Photosystem I P700 chlorophyll a apoprotein A2 (734 aa).

Helical transmembrane passes span 46–69 (IFAS…FHVA), 135–158 (LYTG…LHLQ), 175–199 (LNHH…HVAI), 273–291 (MAHH…GHMY), 330–353 (LHFQ…QHMY), 369–395 (AALY…IFFI), 417–439 (AIIS…LYVH), and 517–535 (FLVH…LILV). Positions 559 and 568 each coordinate [4Fe-4S] cluster. The next 2 helical transmembrane spans lie at 575–596 (AFYL…YWHW) and 643–665 (LSVW…MFLI). Residues H654, M662, and Y670 each contribute to the chlorophyll a site. W671 contacts phylloquinone. A helical transmembrane segment spans residues 707–727 (LVGLAHFSVGYIFTYAAFLIA).

It belongs to the PsaA/PsaB family. The PsaA/B heterodimer binds the P700 chlorophyll special pair and subsequent electron acceptors. PSI consists of a core antenna complex that captures photons, and an electron transfer chain that converts photonic excitation into a charge separation. The eukaryotic PSI reaction center is composed of at least 11 subunits. P700 is a chlorophyll a/chlorophyll a' dimer, A0 is one or more chlorophyll a, A1 is one or both phylloquinones and FX is a shared 4Fe-4S iron-sulfur center. serves as cofactor.

Its subcellular location is the plastid. It is found in the chloroplast thylakoid membrane. It carries out the reaction reduced [plastocyanin] + hnu + oxidized [2Fe-2S]-[ferredoxin] = oxidized [plastocyanin] + reduced [2Fe-2S]-[ferredoxin]. Its function is as follows. PsaA and PsaB bind P700, the primary electron donor of photosystem I (PSI), as well as the electron acceptors A0, A1 and FX. PSI is a plastocyanin-ferredoxin oxidoreductase, converting photonic excitation into a charge separation, which transfers an electron from the donor P700 chlorophyll pair to the spectroscopically characterized acceptors A0, A1, FX, FA and FB in turn. Oxidized P700 is reduced on the lumenal side of the thylakoid membrane by plastocyanin. This Lactuca sativa (Garden lettuce) protein is Photosystem I P700 chlorophyll a apoprotein A2.